The sequence spans 253 residues: MGVGIQVRDLNAYYGKAHVLKHVDMKMAPNHVTALIGPSGCGKSTFVRCLNRMHETIPEAYAEGEVLVGDKDIYARGTAAVDVRRRVGMVFQKPNPFPTMSIYDNVASGLKLNGIRKKAVLDEAVQRSLEASALWNEVKDHLHKKSGASLSGGQQQRLCIARALAVQPDVLLMDEPASALDPISTSKIEELMFTLKENYTVVVVTHNMQQAARVAEYTGFFLMGSVIEFDTTQKIFTTPSDKRTEDYITGRFG.

Residues 5 to 248 (IQVRDLNAYY…PSDKRTEDYI (244 aa)) form the ABC transporter domain. Residue 37–44 (GPSGCGKS) participates in ATP binding.

Belongs to the ABC transporter superfamily. Phosphate importer (TC 3.A.1.7) family. As to quaternary structure, the complex is composed of two ATP-binding proteins (PstB), two transmembrane proteins (PstC and PstA) and a solute-binding protein (PstS).

The protein localises to the cell inner membrane. It carries out the reaction phosphate(out) + ATP + H2O = ADP + 2 phosphate(in) + H(+). Functionally, part of the ABC transporter complex PstSACB involved in phosphate import. Responsible for energy coupling to the transport system. This is Phosphate import ATP-binding protein PstB from Koribacter versatilis (strain Ellin345).